Reading from the N-terminus, the 225-residue chain is MQQLILWQLINSNFPLGAYNYSEGLEYLVESAGCSEVESFQDWLGLHLRYGSIRAEVSIVLRIVQAIASGDFNQLQYWNTWLNGTRETRELRQQSIQMGNSLLKLLGDLDENKRPQLGACREQIGKSCHYAIAFGIAIALWDIESHQAVLGYLHSWLSNLVSAGVKLIPLGQTQGQRIIYQLQPLIIETVETVVTQKEMDLYACTWGLSLASMNHETQYTRLFRS.

This sequence belongs to the UreF family. As to quaternary structure, ureD, UreF and UreG form a complex that acts as a GTP-hydrolysis-dependent molecular chaperone, activating the urease apoprotein by helping to assemble the nickel containing metallocenter of UreC. The UreE protein probably delivers the nickel.

The protein resides in the cytoplasm. In terms of biological role, required for maturation of urease via the functional incorporation of the urease nickel metallocenter. This chain is Urease accessory protein UreF, found in Picosynechococcus sp. (strain ATCC 27264 / PCC 7002 / PR-6) (Agmenellum quadruplicatum).